A 906-amino-acid chain; its full sequence is Protein translocase subunit SecA (906 aa).

ATP is bound by residues Q86, 104 to 108 (GEGKT), and D511. Basic and acidic residues-rich tracts occupy residues 853 to 865 (HESVIDNNQRHDE) and 877 to 888 (VRREGPKVKRND). A disordered region spans residues 853–906 (HESVIDNNQRHDEDEQEEAPKVQQVRREGPKVKRNDPCPCGSGKKYKQCHGKVE). Zn(2+) contacts are provided by C890, C892, C901, and H902. A compositionally biased stretch (basic residues) spans 896 to 906 (KKYKQCHGKVE).

The protein belongs to the SecA family. In terms of assembly, monomer and homodimer. Part of the essential Sec protein translocation apparatus which comprises SecA, SecYEG and auxiliary proteins SecDF-YajC and YidC. It depends on Zn(2+) as a cofactor.

Its subcellular location is the cell inner membrane. It is found in the cytoplasm. It catalyses the reaction ATP + H2O + cellular proteinSide 1 = ADP + phosphate + cellular proteinSide 2.. Functionally, part of the Sec protein translocase complex. Interacts with the SecYEG preprotein conducting channel. Has a central role in coupling the hydrolysis of ATP to the transfer of proteins into and across the cell membrane, serving both as a receptor for the preprotein-SecB complex and as an ATP-driven molecular motor driving the stepwise translocation of polypeptide chains across the membrane. This chain is Protein translocase subunit SecA, found in Francisella tularensis subsp. holarctica (strain FTNF002-00 / FTA).